Consider the following 362-residue polypeptide: H-2 class I histocompatibility antigen, D-K alpha chain (362 aa).

A signal peptide spans 1–24 (MGAMVPRTLLLLLAAALAPAQTRA). The alpha-1 stretch occupies residues 25 to 114 (GPHSLRYFET…LLRYYNQSEG (90 aa)). Residues 25-306 (GPHSLRYFET…RWEPPPSTDS (282 aa)) lie on the Extracellular side of the membrane. N110 is a glycosylation site (N-linked (GlcNAc...) asparagine). Residues 115 to 206 (GSHTIQRLSG…ELGNATLLHT (92 aa)) are alpha-2. Cysteines 125 and 188 form a disulfide. Residues N200 and N280 are each glycosylated (N-linked (GlcNAc...) asparagine). The alpha-3 stretch occupies residues 207-298 (DSPKAHVTHH…GLPEPLTLRW (92 aa)). Residues 209–297 (PKAHVTHHPR…EGLPEPLTLR (89 aa)) form the Ig-like C1-type domain. C227 and C283 are oxidised to a cystine. The interval 299–306 (EPPPSTDS) is connecting peptide. A helical membrane pass occupies residues 307-333 (YMVIVAVLGVLGAVAIIGAVVAFVMMM). Residues 334–362 (RRNTGGKGGDYTLTPGSQSSEMSLPDCKA) lie on the Cytoplasmic side of the membrane. A disordered region spans residues 340-362 (KGGDYTLTPGSQSSEMSLPDCKA). A phosphoserine mark is found at S353 and S356.

This sequence belongs to the MHC class I family. Heterodimer of an alpha chain and a beta chain (beta-2-microglobulin). In terms of processing, polyubiquitinated in case of infection by murid herpesvirus 4, by the viral E3 ligase K3 (mK3), leading to target the protein for rapid degradation by the endoplasmic reticulum-associated degradation (ERAD) system. Ubiquitination takes place on lysine, as well as serine and threonine residues present in the cytoplasmic tail. Hydroxylated serine and threonine residues in the cytoplasmic tail are subject to ubiquitination via ester bonds instead of the classical isopeptide linkage. Hydroxylation of residues in the cytoplasmic tail.

It localises to the membrane. In terms of biological role, involved in the presentation of foreign antigens to the immune system. The chain is H-2 class I histocompatibility antigen, D-K alpha chain (H2-D1) from Mus musculus (Mouse).